The primary structure comprises 159 residues: Cyclic pyranopterin monophosphate synthase (159 aa).

Residues 75–77 and 113–114 each bind substrate; these read LCH and ME. Aspartate 128 is a catalytic residue.

It belongs to the MoaC family. Homohexamer; trimer of dimers.

It carries out the reaction (8S)-3',8-cyclo-7,8-dihydroguanosine 5'-triphosphate = cyclic pyranopterin phosphate + diphosphate. It participates in cofactor biosynthesis; molybdopterin biosynthesis. Catalyzes the conversion of (8S)-3',8-cyclo-7,8-dihydroguanosine 5'-triphosphate to cyclic pyranopterin monophosphate (cPMP). The chain is Cyclic pyranopterin monophosphate synthase from Yersinia pseudotuberculosis serotype IB (strain PB1/+).